A 413-amino-acid polypeptide reads, in one-letter code: MNIYAVGGAIRDELLGVPVQDRDYVVVGATPEQMIAQGFRPVGKDFPVFLHPDTHEEYALARTERKTAAGYHGFQFHYAPDVTLDEDLARRDLTINAMAREVSPDGTLIGPVIDPFDGQRDLRARVFRHVSDAFVEDPVRILRLARFAARFADFTVADDTLALMRRMVDAGEVDALVPERVWQELARGLMEAKPSRMFAVLRDCGALARILPEVDGLWGVPQRADYHPEVDTGVHVMMVVDYAAKQRYSLPVRFAALTHDLGKATTPDDVLPRHTGHEGRSVDLLKPLCERLRVPNECRDLALVVAREHGNLHRVMEMGAAALVRFFERTDALRKPARFAEMLQACEADARGRLGLEAQPYPQAERLRVALAAARSVDAGAIARATGSDSAKIKDAVHRARIEAVAHALEIGE.

ATP is bound by residues Gly-8 and Arg-11. Gly-8 and Arg-11 together coordinate CTP. Residues Asp-21 and Asp-23 each coordinate Mg(2+). 3 residues coordinate ATP: Arg-91, Arg-143, and Arg-146. Positions 91, 143, and 146 each coordinate CTP. One can recognise an HD domain in the interval 232–333 (TGVHVMMVVD…VRFFERTDAL (102 aa)).

This sequence belongs to the tRNA nucleotidyltransferase/poly(A) polymerase family. Bacterial CCA-adding enzyme type 1 subfamily. In terms of assembly, monomer. Can also form homodimers and oligomers. The cofactor is Mg(2+). It depends on Ni(2+) as a cofactor.

The enzyme catalyses a tRNA precursor + 2 CTP + ATP = a tRNA with a 3' CCA end + 3 diphosphate. The catalysed reaction is a tRNA with a 3' CCA end + 2 CTP + ATP = a tRNA with a 3' CCACCA end + 3 diphosphate. In terms of biological role, catalyzes the addition and repair of the essential 3'-terminal CCA sequence in tRNAs without using a nucleic acid template. Adds these three nucleotides in the order of C, C, and A to the tRNA nucleotide-73, using CTP and ATP as substrates and producing inorganic pyrophosphate. tRNA 3'-terminal CCA addition is required both for tRNA processing and repair. Also involved in tRNA surveillance by mediating tandem CCA addition to generate a CCACCA at the 3' terminus of unstable tRNAs. While stable tRNAs receive only 3'-terminal CCA, unstable tRNAs are marked with CCACCA and rapidly degraded. In Burkholderia multivorans (strain ATCC 17616 / 249), this protein is Multifunctional CCA protein.